The primary structure comprises 354 residues: D-alanine--D-alanine ligase (354 aa).

Residues 133–338 (KHLFAQAGLP…YSDLIEQLVE (206 aa)) enclose the ATP-grasp domain. 166-221 (EKELGYPCFVKPANLGSSVGISKCRNREELEKAFELAFEYDRKIVVEEGIAGREIE) provides a ligand contact to ATP. Positions 292, 305, and 307 each coordinate Mg(2+).

The protein belongs to the D-alanine--D-alanine ligase family. Requires Mg(2+) as cofactor. Mn(2+) serves as cofactor.

Its subcellular location is the cytoplasm. It carries out the reaction 2 D-alanine + ATP = D-alanyl-D-alanine + ADP + phosphate + H(+). Its pathway is cell wall biogenesis; peptidoglycan biosynthesis. Functionally, cell wall formation. This chain is D-alanine--D-alanine ligase, found in Bacillus velezensis (strain DSM 23117 / BGSC 10A6 / LMG 26770 / FZB42) (Bacillus amyloliquefaciens subsp. plantarum).